Here is a 179-residue protein sequence, read N- to C-terminus: MTTLKEMYEKEIVPGLKETFGYKNPMEVPKLDKIVLNIGLGEAINNVKLLDSAVEDLALIAGQRPVITKAKKSIAAFKLREGMPIGCMVTLRREKMYDFLLKLINITLPRVRDFRGISGKAFDGHGNYSLGIKEHIIFPEIDFDQTDSIKGLNVSIVTTAKTDKEGKELLKQFGMPFKN.

Belongs to the universal ribosomal protein uL5 family. As to quaternary structure, part of the 50S ribosomal subunit; part of the 5S rRNA/L5/L18/L25 subcomplex. Contacts the 5S rRNA and the P site tRNA. Forms a bridge to the 30S subunit in the 70S ribosome.

Functionally, this is one of the proteins that bind and probably mediate the attachment of the 5S RNA into the large ribosomal subunit, where it forms part of the central protuberance. In the 70S ribosome it contacts protein S13 of the 30S subunit (bridge B1b), connecting the 2 subunits; this bridge is implicated in subunit movement. Contacts the P site tRNA; the 5S rRNA and some of its associated proteins might help stabilize positioning of ribosome-bound tRNAs. The sequence is that of Large ribosomal subunit protein uL5 from Desulforapulum autotrophicum (strain ATCC 43914 / DSM 3382 / VKM B-1955 / HRM2) (Desulfobacterium autotrophicum).